Reading from the N-terminus, the 233-residue chain is Small ribosomal subunit protein uS2 (233 aa).

The protein belongs to the universal ribosomal protein uS2 family.

The protein is Small ribosomal subunit protein uS2 of Clostridium perfringens (strain ATCC 13124 / DSM 756 / JCM 1290 / NCIMB 6125 / NCTC 8237 / Type A).